A 110-amino-acid polypeptide reads, in one-letter code: Large ribosomal subunit protein uL22 (110 aa).

It belongs to the universal ribosomal protein uL22 family. Part of the 50S ribosomal subunit.

In terms of biological role, this protein binds specifically to 23S rRNA; its binding is stimulated by other ribosomal proteins, e.g. L4, L17, and L20. It is important during the early stages of 50S assembly. It makes multiple contacts with different domains of the 23S rRNA in the assembled 50S subunit and ribosome. Its function is as follows. The globular domain of the protein is located near the polypeptide exit tunnel on the outside of the subunit, while an extended beta-hairpin is found that lines the wall of the exit tunnel in the center of the 70S ribosome. The polypeptide is Large ribosomal subunit protein uL22 (Yersinia pseudotuberculosis serotype O:1b (strain IP 31758)).